The primary structure comprises 275 residues: Esterase AAEL000016 (275 aa).

The tract at residues M1–P21 is disordered. A compositionally biased stretch (polar residues) spans A7–T16. Catalysis depends on charge relay system residues S129, D187, and H214. Residues L253 to D275 form a disordered region. Residues D266 to D275 show a composition bias toward acidic residues.

This sequence belongs to the LovG family.

The chain is Esterase AAEL000016 from Aedes aegypti (Yellowfever mosquito).